Reading from the N-terminus, the 201-residue chain is Holliday junction resolvase RecU (201 aa).

Mg(2+) is bound by residues Thr85, Asp87, Asp100, and Gln119.

This sequence belongs to the RecU family. The cofactor is Mg(2+).

It is found in the cytoplasm. The catalysed reaction is Endonucleolytic cleavage at a junction such as a reciprocal single-stranded crossover between two homologous DNA duplexes (Holliday junction).. Endonuclease that resolves Holliday junction intermediates in genetic recombination. Cleaves mobile four-strand junctions by introducing symmetrical nicks in paired strands. Promotes annealing of linear ssDNA with homologous dsDNA. Required for DNA repair, homologous recombination and chromosome segregation. The polypeptide is Holliday junction resolvase RecU (Pediococcus pentosaceus (strain ATCC 25745 / CCUG 21536 / LMG 10740 / 183-1w)).